Here is a 64-residue protein sequence, read N- to C-terminus: Conotoxin reg3.16 (64 aa).

An N-terminal signal peptide occupies residues 1–19; it reads MSKLGVFLTICLLLFPLTA. Positions 20 to 49 are excised as a propeptide; it reads LQLDGDQPADKPAQRKLKILPKRKHWTRFT. 3 disulfide bridges follow: C50–C64, C51–C60, and C56–C63.

Belongs to the conotoxin M superfamily. As to expression, expressed by the venom duct.

The protein localises to the secreted. The sequence is that of Conotoxin reg3.16 from Conus regius (Crown cone).